Reading from the N-terminus, the 261-residue chain is Serine/arginine-rich splicing factor 12 (261 aa).

One can recognise an RRM domain in the interval 10–88 (TSLFIRNVAD…RQIEIQFAQG (79 aa)). The disordered stretch occupies residues 86–261 (AQGDRKTPGQ…SRSYRHKNSW (176 aa)). Residues 88–109 (GDRKTPGQMKSKERHPCSPSDH) are compositionally biased toward basic and acidic residues. 2 stretches are compositionally biased toward basic residues: residues 110–122 (RRSR…RTRS) and 178–191 (GRSR…RSKS). Over residues 192–209 (IGKSQSSSPQKQTSSGTK) the composition is skewed to low complexity. A compositionally biased stretch (polar residues) spans 230 to 239 (GYTNSETKVQ). Basic residues predominate over residues 240–261 (TAKHSHFRSHSRSRSYRHKNSW).

This sequence belongs to the splicing factor SR family. Expressed in testis.

It is found in the nucleus. Its function is as follows. Splicing factor that seems to antagonize SR proteins in pre-mRNA splicing regulation. The sequence is that of Serine/arginine-rich splicing factor 12 (SRSF12) from Homo sapiens (Human).